We begin with the raw amino-acid sequence, 309 residues long: Aspartate carbamoyltransferase catalytic subunit (309 aa).

Positions 57 and 58 each coordinate carbamoyl phosphate. Lys86 provides a ligand contact to L-aspartate. Carbamoyl phosphate contacts are provided by Arg107, His135, and Gln138. Positions 168 and 228 each coordinate L-aspartate. The carbamoyl phosphate site is built by Leu267 and Pro268.

The protein belongs to the aspartate/ornithine carbamoyltransferase superfamily. ATCase family. As to quaternary structure, heterooligomer of catalytic and regulatory chains.

The enzyme catalyses carbamoyl phosphate + L-aspartate = N-carbamoyl-L-aspartate + phosphate + H(+). Its pathway is pyrimidine metabolism; UMP biosynthesis via de novo pathway; (S)-dihydroorotate from bicarbonate: step 2/3. In terms of biological role, catalyzes the condensation of carbamoyl phosphate and aspartate to form carbamoyl aspartate and inorganic phosphate, the committed step in the de novo pyrimidine nucleotide biosynthesis pathway. This is Aspartate carbamoyltransferase catalytic subunit from Cenarchaeum symbiosum (strain A).